We begin with the raw amino-acid sequence, 687 residues long: Chloride channel protein ClC-Kb (687 aa).

The Cytoplasmic segment spans residues Met-1–Trp-50. 2 consecutive transmembrane segments (helical) span residues Tyr-51–Tyr-82 and Leu-91–Ser-111. An intramembrane region (helical) is located at residues Pro-116 to Lys-127. Ser-121 contributes to the chloride binding site. A run of 2 helical transmembrane segments spans residues Ile-141 to Thr-160 and Ile-161 to Leu-180. An intramembrane region (helical) is located at residues Ala-203–Ile-224. Residues Tyr-236–Val-255 traverse the membrane as a helical segment. Residues Glu-259, Glu-261, Asp-278, and Glu-281 each coordinate Ca(2+). The next 2 helical transmembrane spans lie at Ile-282–Leu-310 and Pro-325–Pro-342. An intramembrane region (helical) is located at residues Ala-349–Thr-360. 2 consecutive transmembrane segments (helical) span residues Gly-400–Pro-420 and Ile-421–Phe-440. Phe-426 contacts chloride. Positions Gly-464–Val-496 form an intramembrane region, helical. The helical transmembrane segment at Pro-500–Tyr-520 threads the bilayer. The Cytoplasmic portion of the chain corresponds to Asp-521–Lys-687. 2 consecutive CBS domains span residues Met-551 to Ser-609 and Cys-626 to Lys-687.

The protein belongs to the chloride channel (TC 2.A.49) family. CLCNKB subfamily. As to quaternary structure, homodimer. Interacts with BSND. In terms of processing, N-glycosylated. In terms of tissue distribution, specifically expressed in the kidney, predominantly in the outer medulla and cortex. All nephron segments expressing BSND also express CLCNK proteins.

It localises to the basolateral cell membrane. It carries out the reaction chloride(in) = chloride(out). The enzyme catalyses iodide(out) = iodide(in). The catalysed reaction is nitrate(in) = nitrate(out). It catalyses the reaction bromide(in) = bromide(out). Functionally, anion-selective channel permeable to small monovalent anions with ion selectivity for chloride &gt; bromide &gt; nitrate &gt; iodide. Forms a homodimeric channel where each subunit has its own ion conduction pathway. May conduct double-barreled currents controlled by two types of gates, two fast gates that control each subunit independently and a slow common gate that opens and shuts off both subunits simultaneously. Assembles with the regulatory subunit BSND/Barttin for sorting at the basolateral plasma membrane domain and functional switch to the ion conducting state. CLCNKB:BSND channels display mostly a linear current-voltage relationship controlled by common gate. Mediates chloride conductance along nephron segments, namely the thick ascending limb of Henle's loop, convoluted tubule and the collecting duct, contributing to the maintenance of systemic acid-base and electrolyte homeostasis. Conducts chloride currents in the stria vascularis of the inner ear to establish the endocochlear potential necessary for normal hearing. This Mus musculus (Mouse) protein is Chloride channel protein ClC-Kb.